We begin with the raw amino-acid sequence, 274 residues long: N-acetylmuramic acid 6-phosphate etherase (274 aa).

The SIS domain maps to Ile52–Arg215. Glu80 acts as the Proton donor in catalysis. Glu111 is a catalytic residue.

This sequence belongs to the GCKR-like family. MurNAc-6-P etherase subfamily. Homodimer.

It carries out the reaction N-acetyl-D-muramate 6-phosphate + H2O = N-acetyl-D-glucosamine 6-phosphate + (R)-lactate. It functions in the pathway amino-sugar metabolism; N-acetylmuramate degradation. Its function is as follows. Specifically catalyzes the cleavage of the D-lactyl ether substituent of MurNAc 6-phosphate, producing GlcNAc 6-phosphate and D-lactate. This is N-acetylmuramic acid 6-phosphate etherase from Porphyromonas gingivalis (strain ATCC 33277 / DSM 20709 / CIP 103683 / JCM 12257 / NCTC 11834 / 2561).